Reading from the N-terminus, the 643-residue chain is RNA-binding protein MEX3D (643 aa).

2 disordered regions span residues methionine 1 to alanine 48 and glycine 61 to aspartate 92. The segment covering threonine 18–aspartate 34 has biased composition (low complexity). Residues cysteine 83–aspartate 92 are compositionally biased toward acidic residues. KH domains follow at residues methionine 160 to isoleucine 221 and glutamine 253 to isoleucine 314. Disordered stretches follow at residues proline 357 to threonine 427, glycine 471 to serine 505, and valine 519 to proline 583. Positions glycine 405 to glycine 418 are enriched in gly residues. Residue threonine 491 is modified to Phosphothreonine. Serine 495 is modified (phosphoserine). Low complexity-rich tracts occupy residues serine 495–serine 505, leucine 531–leucine 556, and proline 567–proline 583. Residues cysteine 592 to arginine 632 form an RING-type zinc finger.

It is found in the cytoplasm. Its subcellular location is the nucleus. In terms of biological role, RNA binding protein, may be involved in post-transcriptional regulatory mechanisms. The sequence is that of RNA-binding protein MEX3D (Mex3d) from Mus musculus (Mouse).